The following is a 348-amino-acid chain: Dihydroorotase (348 aa).

Residues histidine 14 and histidine 16 each contribute to the Zn(2+) site. Substrate-binding positions include histidine 16–arginine 18 and asparagine 42. Residues lysine 100, histidine 137, and histidine 175 each coordinate Zn(2+). Lysine 100 carries the post-translational modification N6-carboxylysine. Substrate is bound at residue histidine 137. Residue leucine 220 coordinates substrate. Aspartate 248 contributes to the Zn(2+) binding site. Aspartate 248 is an active-site residue. Residues histidine 252 and alanine 264 each contribute to the substrate site.

This sequence belongs to the metallo-dependent hydrolases superfamily. DHOase family. Class II DHOase subfamily. As to quaternary structure, homodimer. Zn(2+) is required as a cofactor.

The catalysed reaction is (S)-dihydroorotate + H2O = N-carbamoyl-L-aspartate + H(+). It functions in the pathway pyrimidine metabolism; UMP biosynthesis via de novo pathway; (S)-dihydroorotate from bicarbonate: step 3/3. Catalyzes the reversible cyclization of carbamoyl aspartate to dihydroorotate. The chain is Dihydroorotase from Pseudomonas fluorescens (strain ATCC BAA-477 / NRRL B-23932 / Pf-5).